We begin with the raw amino-acid sequence, 360 residues long: Mannose-1-phosphate guanylyltransferase catalytic subunit beta (360 aa).

Residues 2–222 (KALILVGGYG…QGFWMDIGQP (221 aa)) form a substrate-binding domain region. Residue Asp-110 participates in GDP-alpha-D-mannose binding. Residue Asp-110 participates in Mg(2+) binding. Lys-162 is an active-site residue. Asp-218 provides a ligand contact to GDP-alpha-D-mannose. Asp-218 is a Mg(2+) binding site. Residues 245 to 360 (CSGPGIVGNV…ESVPEPGIIM (116 aa)) form a hexapeptide repeat domain region.

This sequence belongs to the transferase hexapeptide repeat family. As to quaternary structure, component of the GMPPA-GMPPB mannose-1-phosphate guanylyltransferase complex composed of 4 GMPPA subunits and 8 GMPPB subunits; the complex is organized into three layers, a central layer made up of 2 GMPPA dimers sandwiched between two layers each made up of 2 GMPPB dimers. GMPPB catalytic activity is reduced when part of the complex and binding of GDP-alpha-D-Mannose by GMPPA induces allosteric feedback inhibition of GMPPB. It depends on Mg(2+) as a cofactor. Expressed in the liver (at protein level).

It is found in the cytoplasm. The enzyme catalyses alpha-D-mannose 1-phosphate + GTP + H(+) = GDP-alpha-D-mannose + diphosphate. Its pathway is nucleotide-sugar biosynthesis; GDP-alpha-D-mannose biosynthesis; GDP-alpha-D-mannose from alpha-D-mannose 1-phosphate (GTP route): step 1/1. With respect to regulation, enzyme activity is reduced by incorporation into the GMPPA-GMPPB mannose-1-phosphate guanylyltransferase complex. Allosterically inhibited, when part of the GMPPA-GMPPB complex, by GDP-alpha-D-mannose binding to GMPPA. Catalytic subunit of the GMPPA-GMPPB mannose-1-phosphate guanylyltransferase complex. Catalyzes the formation of GDP-mannose, an essential precursor of glycan moieties of glycoproteins and glycolipids. Can catalyze the reverse reaction in vitro. Together with GMPPA regulates GDP-alpha-D-mannose levels. This is Mannose-1-phosphate guanylyltransferase catalytic subunit beta from Sus scrofa (Pig).